The chain runs to 196 residues: uncharacterized protein (196 aa).

This sequence belongs to the mimivirus R24/R907 family.

This is an uncharacterized protein from Acanthamoeba polyphaga (Amoeba).